The chain runs to 264 residues: Small ribosomal subunit protein eS1 (264 aa).

This sequence belongs to the eukaryotic ribosomal protein eS1 family. In terms of assembly, component of the small ribosomal subunit. Mature ribosomes consist of a small (40S) and a large (60S) subunit. The 40S subunit contains about 33 different proteins and 1 molecule of RNA (18S). The 60S subunit contains about 49 different proteins and 3 molecules of RNA (25S, 5.8S and 5S).

The protein resides in the cytoplasm. In Babesia bovis, this protein is Small ribosomal subunit protein eS1.